The chain runs to 159 residues: Transcription elongation factor GreA (159 aa).

This sequence belongs to the GreA/GreB family.

Its function is as follows. Necessary for efficient RNA polymerase transcription elongation past template-encoded arresting sites. The arresting sites in DNA have the property of trapping a certain fraction of elongating RNA polymerases that pass through, resulting in locked ternary complexes. Cleavage of the nascent transcript by cleavage factors such as GreA or GreB allows the resumption of elongation from the new 3'terminus. GreA releases sequences of 2 to 3 nucleotides. This Mycoplasmoides gallisepticum (strain R(low / passage 15 / clone 2)) (Mycoplasma gallisepticum) protein is Transcription elongation factor GreA.